The following is a 546-amino-acid chain: Glucose-6-phosphate isomerase (546 aa).

The Proton donor role is filled by Glu352. Residues His383 and Lys511 contribute to the active site.

Belongs to the GPI family.

The protein localises to the cytoplasm. The catalysed reaction is alpha-D-glucose 6-phosphate = beta-D-fructose 6-phosphate. It functions in the pathway carbohydrate biosynthesis; gluconeogenesis. The protein operates within carbohydrate degradation; glycolysis; D-glyceraldehyde 3-phosphate and glycerone phosphate from D-glucose: step 2/4. Catalyzes the reversible isomerization of glucose-6-phosphate to fructose-6-phosphate. In Paramagnetospirillum magneticum (strain ATCC 700264 / AMB-1) (Magnetospirillum magneticum), this protein is Glucose-6-phosphate isomerase.